Here is a 77-residue protein sequence, read N- to C-terminus: Conotoxin Mr8.2 (77 aa).

The signal sequence occupies residues 1–16; the sequence is MLRLITAAVLVSACLA. The propeptide occupies 17 to 32; the sequence is YPQKKRTPPQTRPTSR.

It belongs to the conotoxin B2 family. In terms of processing, contains 5 disulfide bonds. Expressed by the venom duct.

It is found in the secreted. In Conus marmoreus (Marble cone), this protein is Conotoxin Mr8.2.